The sequence spans 204 residues: uncharacterized protein (204 aa).

The tract at residues 47–108 is disordered; sequence TDSSDDEGGA…EDSDEEGEGG (62 aa). The segment covering 49-106 has biased composition (acidic residues); that stretch reads SSDDEGGASSGDEGEASSDDEGDASSDDEEEASSDGEGVVEDEETLDAEGEDSDEEGE.

The protein resides in the mitochondrion. This is an uncharacterized protein from Paramecium tetraurelia.